Reading from the N-terminus, the 752-residue chain is Polyribonucleotide nucleotidyltransferase (752 aa).

Residues D519 and D525 each contribute to the Mg(2+) site. The KH domain occupies 585 to 644 (PRVIAVKIPVDKIGEVIGPKGKMINQIQEDTGADISIEDDGTVYIGATNGPSADAARSAI). Residues 656-728 (GERYLGTVVK…DRGKLSLSPV (73 aa)) form the S1 motif domain. A disordered region spans residues 727–752 (PVVAEEEGAEGAERAHATEPAEGAEI).

Belongs to the polyribonucleotide nucleotidyltransferase family. Mg(2+) is required as a cofactor.

The protein resides in the cytoplasm. The enzyme catalyses RNA(n+1) + phosphate = RNA(n) + a ribonucleoside 5'-diphosphate. In terms of biological role, involved in mRNA degradation. Catalyzes the phosphorolysis of single-stranded polyribonucleotides processively in the 3'- to 5'-direction. This chain is Polyribonucleotide nucleotidyltransferase, found in Pseudarthrobacter chlorophenolicus (strain ATCC 700700 / DSM 12829 / CIP 107037 / JCM 12360 / KCTC 9906 / NCIMB 13794 / A6) (Arthrobacter chlorophenolicus).